Consider the following 195-residue polypeptide: UPF0215 protein TGAM_0348 (195 aa).

This sequence belongs to the UPF0215 family.

This chain is UPF0215 protein TGAM_0348, found in Thermococcus gammatolerans (strain DSM 15229 / JCM 11827 / EJ3).